Consider the following 493-residue polypeptide: Alpha-amylase-related protein (493 aa).

An N-terminal signal peptide occupies residues 1–19; sequence MFKLAFTLTLCLAGSLSLA. Q20 is modified (pyrrolidone carboxylic acid). Residues C47 and C103 are joined by a disulfide bond. Positions 117, 168, and 177 each coordinate Ca(2+). C156 and C170 are oxidised to a cystine. R205 contacts chloride. Residue D207 is the Nucleophile of the active site. Residue H211 participates in Ca(2+) binding. E244 serves as the catalytic Proton donor. Positions 307 and 342 each coordinate chloride. 3 disulfide bridges follow: C375–C381, C417–C440, and C447–C459.

The protein belongs to the glycosyl hydrolase 13 family. As to quaternary structure, monomer. The cofactor is Ca(2+). Chloride is required as a cofactor.

The protein resides in the secreted. It carries out the reaction Endohydrolysis of (1-&gt;4)-alpha-D-glucosidic linkages in polysaccharides containing three or more (1-&gt;4)-alpha-linked D-glucose units.. In Drosophila orena (Fruit fly), this protein is Alpha-amylase-related protein (Amyrel).